Here is a 332-residue protein sequence, read N- to C-terminus: Cysteine and histidine-rich domain-containing protein 1 (332 aa).

An N-acetylalanine modification is found at Ala-2. Residues 2–77 (ALLCYNRACG…KPPEPVKPEV (76 aa)) are interaction with PPP5C. Residues Cys-5, Cys-10, Cys-24, His-27, Cys-42, and Cys-43 each coordinate Zn(2+). CHORD domains follow at residues 5-64 (CYNR…KGRH) and 157-216 (CKNG…KGRH). Thr-47 is modified (phosphothreonine). The residue at position 51 (Ser-51) is a Phosphoserine. Zn(2+)-binding residues include Cys-59, His-64, Cys-157, Cys-162, Cys-176, His-179, Cys-194, Cys-195, Cys-211, and His-216. A disordered region spans residues 62–82 (GRHNSEKPPEPVKPEVKTTEK). Residues 64–82 (HNSEKPPEPVKPEVKTTEK) are compositionally biased toward basic and acidic residues. The segment at 65 to 316 (NSEKPPEPVK…AEPMQWASLE (252 aa)) is interaction with HSP90AA1 and HSP90AB1. The CS domain maps to 227-316 (VVPCRHDWHQ…AEPMQWASLE (90 aa)).

In terms of assembly, interacts with HSP90AA1, HSP90AB1, PPP5C, ROCK1 and ROCK2.

Regulates centrosome duplication, probably by inhibiting the kinase activity of ROCK2. Proposed to act as co-chaperone for HSP90. May play a role in the regulation of NOD1 via a HSP90 chaperone complex. In vitro, has intrinsic chaperone activity. This function may be achieved by inhibiting association of ROCK2 with NPM1. Plays a role in ensuring the localization of the tyrosine kinase receptor EGFR to the plasma membrane, and thus ensures the subsequent regulation of EGFR activity and EGF-induced actin cytoskeleton remodeling. Involved in stress response. Prevents tumorigenesis. The sequence is that of Cysteine and histidine-rich domain-containing protein 1 (CHORDC1) from Macaca fascicularis (Crab-eating macaque).